Consider the following 93-residue polypeptide: MTKSELIEQLCSKKPQLSAKQVEDTVKEVLEQMATTLEGGDRIEIRGFGSFSLHYREPRLGRNPKTGDKVELDGKFVPHFKPGKELRERVNFS.

It belongs to the bacterial histone-like protein family. Heterodimer of an alpha and a beta chain.

In terms of biological role, this protein is one of the two subunits of integration host factor, a specific DNA-binding protein that functions in genetic recombination as well as in transcriptional and translational control. In Aliivibrio salmonicida (strain LFI1238) (Vibrio salmonicida (strain LFI1238)), this protein is Integration host factor subunit beta.